Consider the following 481-residue polypeptide: MKVTLPDFRRAGVLVVGDVMLDRYWYGPTSRISPEAPVPIVKVDAIEERPGGAANVAMNIAALGCHSRLVGLTGIDDAARALGARLSEVDVTCDFVAVATHPTVTKLRVLSRNQQLIRLDFEQGFDDVDAAPMIERIQLALPKTGALVLSDYAKGALARVREMITLARAAGVPVLVDPKGTDFDRYRGATLLTPNLSEFEAVAGPCKDEETLVSRGMKLIADYQLSALLITRSEQGMTLLQPGKDPLHLPTQAQEVYDVTGAGDTVIGVLAAALAAGNSLEDSCFLANAAAGVVVGKLGTSTVSPIELENAIRGRAETGFGVMTESELKQAVAVARQRGEKVVMTNGIFDILHAGHVSYLANAQRLGDRLIVAVNSDESTKRLKGESRPVNPLAQRMTVLAALEAVDWVVPFSEDTPQRLIADVLPDVLVKGGDYQPHQIAGSKEVWDNGGDVLVLNFEDGCSTTNIINAIKRRAGQRTVV.

Positions 1-318 are ribokinase; it reads MKVTLPDFRR…ENAIRGRAET (318 aa). Residue 195-198 coordinates ATP; the sequence is NLSE. Residue aspartate 264 is part of the active site. Positions 344-481 are cytidylyltransferase; that stretch reads MTNGIFDILH…KRRAGQRTVV (138 aa).

It in the N-terminal section; belongs to the carbohydrate kinase PfkB family. The protein in the C-terminal section; belongs to the cytidylyltransferase family. In terms of assembly, homodimer.

The enzyme catalyses D-glycero-beta-D-manno-heptose 7-phosphate + ATP = D-glycero-beta-D-manno-heptose 1,7-bisphosphate + ADP + H(+). The catalysed reaction is D-glycero-beta-D-manno-heptose 1-phosphate + ATP + H(+) = ADP-D-glycero-beta-D-manno-heptose + diphosphate. Its pathway is nucleotide-sugar biosynthesis; ADP-L-glycero-beta-D-manno-heptose biosynthesis; ADP-L-glycero-beta-D-manno-heptose from D-glycero-beta-D-manno-heptose 7-phosphate: step 1/4. It participates in nucleotide-sugar biosynthesis; ADP-L-glycero-beta-D-manno-heptose biosynthesis; ADP-L-glycero-beta-D-manno-heptose from D-glycero-beta-D-manno-heptose 7-phosphate: step 3/4. Its function is as follows. Catalyzes the phosphorylation of D-glycero-D-manno-heptose 7-phosphate at the C-1 position to selectively form D-glycero-beta-D-manno-heptose-1,7-bisphosphate. Functionally, catalyzes the ADP transfer from ATP to D-glycero-beta-D-manno-heptose 1-phosphate, yielding ADP-D-glycero-beta-D-manno-heptose. In Sodalis glossinidius (strain morsitans), this protein is Bifunctional protein HldE.